The primary structure comprises 565 residues: NAD-dependent malic enzyme (565 aa).

Residue Tyr-104 is the Proton donor of the active site. Residue Arg-157 coordinates NAD(+). Lys-175 (proton acceptor) is an active-site residue. Residues Glu-246, Asp-247, and Asp-270 each coordinate a divalent metal cation. Residues Asp-270 and Asn-418 each contribute to the NAD(+) site.

The protein belongs to the malic enzymes family. Homotetramer. Requires Mg(2+) as cofactor. The cofactor is Mn(2+).

The catalysed reaction is (S)-malate + NAD(+) = pyruvate + CO2 + NADH. The enzyme catalyses oxaloacetate + H(+) = pyruvate + CO2. This is NAD-dependent malic enzyme from Salmonella arizonae (strain ATCC BAA-731 / CDC346-86 / RSK2980).